A 171-amino-acid polypeptide reads, in one-letter code: uncharacterized protein (171 aa).

The signal sequence occupies residues 1-24; that stretch reads MIFDSLTMTQSSLSLLLLTGAIFS. The Extracellular segment spans residues 25–70; sequence ISALYLTLFHRCATFSATSDLFLLVPLKFVSRDINDRLKTHYHHSC. A helical transmembrane segment spans residues 71–91; the sequence is LGSPFLCIIFLFISPLLNYHF. Over 92–140 the chain is Cytoplasmic; the sequence is RSLVRPPKIHQKGSIPTLTKNAETRCSHHLKQAAATGEVCKVVVIIKGH. The chain crosses the membrane as a helical span at residues 141–161; that stretch reads ILKDCSIFFFIIFPLIYPLFI. Topologically, residues 162-171 are extracellular; it reads NCSSKYNGLQ.

It is found in the membrane. This is an uncharacterized protein from Saccharomyces cerevisiae (strain ATCC 204508 / S288c) (Baker's yeast).